Here is a 220-residue protein sequence, read N- to C-terminus: MEFIVCNGCGCSPSKRQFFITACSHVFCETCRTTPTADFCHLCKIPTKTLKMDASLPKNVKKMFGDVGVMSTDIHKRLARVIGFQKIQKSIQLKMENKKSVMRKEQTKKVEKKTEEMHCQLSKLTSFEENNRKKLEDIERENEKLRNLISALELKVASSRDIDDDEFFMQGTPTSSNPSVAGSDVDNDELLDYDLLGLRNRSDSSSSNCSSQSNRGGSLF.

The RING-type zinc finger occupies 6-44; it reads CNGCGCSPSKRQFFITACSHVFCETCRTTPTADFCHLCK. The stretch at 124 to 155 forms a coiled coil; the sequence is LTSFEENNRKKLEDIERENEKLRNLISALELK. Disordered stretches follow at residues 166–186 and 201–220; these read EFFMQGTPTSSNPSVAGSDVD and RSDSSSSNCSSQSNRGGSLF. Residues 171 to 180 are compositionally biased toward polar residues; the sequence is GTPTSSNPSV.

Interacts with zhp-2; the interaction is required for their chromosome association and stability. As to expression, expressed in the germline.

Its subcellular location is the chromosome. Recruited co-dependently with zhp-2 to the synaptonemal complex between homologous chromosome pairs to regulate the formation and number of crossover events between homologs during meiotic recombination. Together with zhp-2, promotes the accumulation of pro-crossover proteins, including zhp-3 and zhp-4, at a designated crossover site along the recombination intermediate. Limits the number of crossover sites along a recombination intermediate by restricting the association of these pro-crossover proteins with other recombination sites during late prophase. Also, together with zhp-2, plays a role in chromosome remodeling following crossover formation to promote two successive rounds of chromosome segregation during meiosis. The polypeptide is Zip homologous protein 1 (Caenorhabditis elegans).